Reading from the N-terminus, the 116-residue chain is MAKMAMMVLCAGVTCMVVGAPYTEALSCGQVSSSLAPCISYLTKGGAVPPACCSGVKSLNSAAKTTPDRQAACGCLKSAYNSISGVNAGNAASFPGKCGVSIPYKISPSTDCSKVQ.

An N-terminal signal peptide occupies residues 1 to 25 (MAKMAMMVLCAGVTCMVVGAPYTEA). Cystine bridges form between Cys-28-Cys-75, Cys-38-Cys-52, Cys-53-Cys-98, and Cys-73-Cys-112.

The protein belongs to the plant LTP family.

Functionally, plant non-specific lipid-transfer proteins transfer phospholipids as well as galactolipids across membranes. May play a role in wax or cutin deposition in the cell walls of expanding epidermal cells and certain secretory tissues. In Helianthus annuus (Common sunflower), this protein is Non-specific lipid-transfer protein.